Here is a 305-residue protein sequence, read N- to C-terminus: UDP-3-O-acyl-N-acetylglucosamine deacetylase (305 aa).

Residues His78, His237, and Asp241 each coordinate Zn(2+). His264 (proton donor) is an active-site residue.

This sequence belongs to the LpxC family. Zn(2+) serves as cofactor.

It carries out the reaction a UDP-3-O-[(3R)-3-hydroxyacyl]-N-acetyl-alpha-D-glucosamine + H2O = a UDP-3-O-[(3R)-3-hydroxyacyl]-alpha-D-glucosamine + acetate. It participates in glycolipid biosynthesis; lipid IV(A) biosynthesis; lipid IV(A) from (3R)-3-hydroxytetradecanoyl-[acyl-carrier-protein] and UDP-N-acetyl-alpha-D-glucosamine: step 2/6. In terms of biological role, catalyzes the hydrolysis of UDP-3-O-myristoyl-N-acetylglucosamine to form UDP-3-O-myristoylglucosamine and acetate, the committed step in lipid A biosynthesis. The protein is UDP-3-O-acyl-N-acetylglucosamine deacetylase of Burkholderia thailandensis (strain ATCC 700388 / DSM 13276 / CCUG 48851 / CIP 106301 / E264).